A 173-amino-acid chain; its full sequence is Tumor necrosis factor ligand superfamily member 18 (173 aa).

Residues 1-20 lie on the Cytoplasmic side of the membrane; the sequence is MEEMPLRESSPQRAERCKKS. The chain crosses the membrane as a helical; Signal-anchor for type II membrane protein span at residues 21-41; sequence WLLCIVALLLMLLCSLGTLIY. One can recognise a THD domain in the interval 40–166; sequence IYTSLKPTAI…TNTYWGIILM (127 aa). At 42–173 the chain is on the extracellular side; the sequence is TSLKPTAIES…ILMPDLPFIS (132 aa). Cysteine 52 and cysteine 72 are oxidised to a cystine. Residue asparagine 74 is glycosylated (N-linked (GlcNAc...) asparagine).

It belongs to the tumor necrosis factor family. Homotrimer. Homodimer. Post-translationally, N-glycosylated. As to expression, detected in immature and mature dendritic cells and in macrophages (at protein level). Detected in spleen, lung, heart, thymus, monocytes, macrophages, B-cells and dendritic cells.

The protein localises to the cell membrane. Its function is as follows. Cytokine that binds to TNFRSF18/AITR/GITR. Regulates T-cell responses. Can function as costimulator and lower the threshold for T-cell activation and T-cell proliferation. Important for interactions between activated T-lymphocytes and endothelial cells. Mediates activation of NF-kappa-B. Triggers increased phosphorylation of STAT1 and up-regulates expression of VCAM1 and ICAM1. Promotes leukocyte adhesion to endothelial cells. Regulates migration of monocytes from the splenic reservoir to sites of inflammation. This Mus musculus (Mouse) protein is Tumor necrosis factor ligand superfamily member 18 (Tnfsf18).